The sequence spans 3573 residues: Zinc finger homeobox protein 4 (3573 aa).

The segment covering 1-28 (METCDSPTISRQENGQSTSKLCGTTQLD) has biased composition (polar residues). Disordered regions lie at residues 1-54 (METC…LRTD), 425-479 (LSHS…DTYS), and 522-606 (TSSS…GSPG). Composition is skewed to basic and acidic residues over residues 39-54 (EPDR…LRTD) and 434-452 (KLSE…KETN). Residues 468–479 (EPVEEEDEDTYS) are compositionally biased toward acidic residues. A compositionally biased stretch (polar residues) spans 585–599 (SVTPHQHSFTPSTPS). 3 consecutive C2H2-type zinc fingers follow at residues 609–632 (IECP…TMMH), 640–663 (LKCP…KEKH), and 695–719 (FRCE…SDKH). The segment at 763 to 785 (WRCEVCDYETNVARNLRIHMTSE) adopts a C2H2-type 4; degenerate zinc-finger fold. 3 C2H2-type zinc fingers span residues 913–937 (YQCK…TDKH), 969–991 (LKCN…TTNH), and 1017–1041 (YYCA…SVKH). A disordered region spans residues 1096–1132 (GEDTEGSAKSTSVAIGDDKDSSERDNTEAKKSSKDSV). Residues 1111–1129 (GDDKDSSERDNTEAKKSSK) are compositionally biased toward basic and acidic residues. 2 C2H2-type zinc fingers span residues 1168–1191 (YQCP…LSQH) and 1197–1220 (ICCP…THLH). The segment at 1250–1340 (AASEKSERDT…EQQKKQQLSV (91 aa)) is disordered. Basic and acidic residues predominate over residues 1277–1306 (VDEKSTPGTDESKPGMEIKSEEQKPPKESA). Polar residues predominate over residues 1322–1340 (TDSMPDQLNEQQKKQQLSV). C2H2-type zinc fingers lie at residues 1348–1370 (YRCN…SQYH) and 1376–1399 (TMCS…EAGH). The segment at 1442–1476 (YEMEQEGKASPVGSDSSSIPDDMGSEPKRTLPFRK) is disordered. 2 C2H2-type zinc fingers span residues 1492 to 1518 (YKCT…SHLH) and 1544 to 1568 (YKCS…SVLH). Disordered regions lie at residues 1577-1596 (LEPS…VNSP) and 1795-1843 (YKES…IASG). A compositionally biased stretch (low complexity) spans 1580-1596 (SGNISSGNSVAGNVNSP). Residues 1795–1830 (YKESEEISEKQEKPKQEFTNESEGLKENKDMKKPKS) are compositionally biased toward basic and acidic residues. A C2H2-type 14 zinc finger spans residues 1886–1909 (LECGTCSKLFSNILILKSHQEHVH). Positions 1933–2013 (YPISPSSPET…PSAPPQVQLP (81 aa)) are disordered. 2 stretches are compositionally biased toward pro residues: residues 1940-1962 (PETP…PTPS) and 1980-2007 (LQAP…PSAP). 2 DNA-binding regions (homeobox) span residues 2072 to 2131 (FKRP…RQRN) and 2169 to 2228 (KRSS…RKSY). The C2H2-type 15; degenerate zinc-finger motif lies at 2255–2279 (YQCKKCSVVFPRIFDLITHQKKQCY). Disordered regions lie at residues 2278-2300 (CYKD…DASD) and 2318-2426 (SLAV…TPLQ). Acidic residues predominate over residues 2281-2297 (DEDDDAQDESQTEDSMD). Residues 2318-2334 (SLAVTAASSGSGSSTPL) are compositionally biased toward low complexity. Positions 2340–2357 (PEPEKASPKSESTEKPKP) are enriched in basic and acidic residues. Low complexity-rich tracts occupy residues 2360-2373 (TISK…QSSK) and 2382-2413 (PSDP…TTPV). The C2H2-type 16 zinc-finger motif lies at 2436–2458 (YQCDQCTVAFPTLELWQEHQHMH). Over residues 2499–2509 (LAQMPPQTGSS) the composition is skewed to polar residues. Residues 2499–2553 (LAQMPPQTGSSHAAHPATVSGSMKRKLDDKEDNNCSEKEGGNSGEDQHRDKRLRT) form a disordered region. Basic and acidic residues predominate over residues 2523–2547 (RKLDDKEDNNCSEKEGGNSGEDQHR). Residues 2548–2607 (DKRLRTTITPEQLEILYEKYLLDSNPTRKMLDHIAREVGLKKRVVQVWFQNTRARERKGQ) constitute a DNA-binding region (homeobox 3). A C2H2-type 17 zinc finger spans residues 2618-2641 (KRCPFCRALFKAKSALESHIRSRH). Disordered regions lie at residues 2704 to 2788 (EMSP…PKPL) and 2820 to 2875 (FSEK…PGHK). Polar residues-rich tracts occupy residues 2709–2718 (NLLSPSSFKA) and 2746–2773 (TSSI…TGSS). Positions 2820 to 2829 (FSEKDGDHDQ) are enriched in basic and acidic residues. Positions 2874 to 2933 (HKRFRTQMSNLQLKVLKACFSDYRTPTMQECEMLGNEIGLPKRVVQVWFQNARAKEKKFK) form a DNA-binding region, homeobox 4. The C2H2-type 18; degenerate zinc finger occupies 2952–2976 (PECSLCGVKYSARLSIRDHIFSKQH). Disordered regions lie at residues 3060–3174 (PSSL…KHLK) and 3287–3343 (LQKQ…LDSK). Low complexity predominate over residues 3084-3104 (PTSATSSPALSLSSAPSKPLL). Residues 3105-3129 (QTPPPPPPPPPPPPPPPPPPPPPPS) are compositionally biased toward pro residues. Residues 3159-3174 (IKEEELEANKPEKHLK) are compositionally biased toward basic and acidic residues. Residues 3271-3316 (ALLQQYQQYQQNLQDSLQKQQKQQQEQQQKQVQAKSSKAENDQQQN) adopt a coiled-coil conformation. Over residues 3287 to 3305 (LQKQQKQQQEQQQKQVQAK) the composition is skewed to low complexity. Basic and acidic residues predominate over residues 3321 to 3343 (SETKEDRSSATESTKEEPQLDSK). Residues 3360 to 3384 (FICRKCQMMFTDEDAAVNHQKSFCY) form a C2H2-type 19; degenerate zinc finger. A C2H2-type 20 zinc finger spans residues 3404 to 3428 (YQCLACDVAISGNEALSQHLQSSLH). Disordered regions lie at residues 3449-3468 (HSVC…AASS) and 3518-3543 (TSGV…QKLE). Positions 3453-3468 (SPNPNTTSTSQSAASS) are enriched in low complexity.

Belongs to the krueppel C2H2-type zinc-finger protein family.

It is found in the nucleus. In terms of biological role, may play a role in neural and muscle differentiation. May be involved in transcriptional regulation. The sequence is that of Zinc finger homeobox protein 4 (ZFHX4) from Gallus gallus (Chicken).